The following is a 325-amino-acid chain: MGIFPGIILIFLRVKFATAAVIVSGHQKSTTVSHEMSGLNWKPFVYGGLASIVAEFGTFPVDLTKTRLQVQGQSIDARFKEIKYRGMFHALFRICKEEGVLALYSGIAPALLRQASYGTIKIGIYQSLKRLFVERLEDETLLINMICGVVSGVISSTIANPTDVLKIRMQAQGSLFQGSMIGSFIDIYQQEGTRGLWRGVVPTAQRAAIVVGVELPVYDITKKHLILSGMMGDTILTHFVSSFTCGLAGALASNPVDVVRTRMMNQRAIVGHVDLYKGTVDGILKMWKHEGFFALYKGFWPNWLRLGPWNIIFFITYEQLKRLQI.

The next 6 membrane-spanning stretches (helical) occupy residues 38 to 54 (GLNW…SIVA), 112 to 128 (LRQA…YQSL), 141 to 161 (LLIN…IANP), 199 to 215 (GVVP…GVEL), 240 to 256 (VSSF…SNPV), and 298 to 315 (GFWP…IFFI). Solcar repeat units lie at residues 42–131 (KPFV…LKRL), 139–224 (ETLL…TKKH), and 233–323 (DTIL…LKRL).

This sequence belongs to the mitochondrial carrier (TC 2.A.29) family. As to quaternary structure, homotetramer. As to expression, mainly expressed in brain. Some expression in testis and pituitary.

It localises to the mitochondrion inner membrane. The enzyme catalyses sulfite(in) + sulfate(out) = sulfite(out) + sulfate(in). It catalyses the reaction thiosulfate(in) + sulfate(out) = thiosulfate(out) + sulfate(in). It carries out the reaction sulfate(out) + phosphate(in) = sulfate(in) + phosphate(out). The catalysed reaction is oxalate(in) + sulfate(out) = oxalate(out) + sulfate(in). The enzyme catalyses malonate(in) + sulfate(out) = malonate(out) + sulfate(in). It catalyses the reaction maleate(in) + sulfate(out) = maleate(out) + sulfate(in). It carries out the reaction (S)-malate(in) + sulfate(out) = (S)-malate(out) + sulfate(in). The catalysed reaction is (3S)-citramalate(in) + sulfate(out) = (3S)-citramalate(out) + sulfate(in). The enzyme catalyses (3R)-citramalate(in) + sulfate(out) = (3R)-citramalate(out) + sulfate(in). It catalyses the reaction sulfate(out) + succinate(in) = sulfate(in) + succinate(out). It carries out the reaction (S,S)-tartrate(in) + sulfate(out) = (S,S)-tartrate(out) + sulfate(in). The catalysed reaction is (2R,3R)-tartrate(in) + sulfate(out) = (2R,3R)-tartrate(out) + sulfate(in). The enzyme catalyses D-aspartate(in) + sulfate(out) = D-aspartate(out) + sulfate(in). It catalyses the reaction L-aspartate(in) + sulfate(out) = L-aspartate(out) + sulfate(in). It carries out the reaction sulfate(in) = sulfate(out). The catalysed reaction is phosphate(in) = phosphate(out). The enzyme catalyses (S)-malate(out) = (S)-malate(in). It catalyses the reaction citrate(in) = citrate(out). It carries out the reaction L-aspartate(out) = L-aspartate(in). The catalysed reaction is L-glutamate(out) = L-glutamate(in). The enzyme catalyses H(+)(in) = H(+)(out). It catalyses the reaction chloride(in) = chloride(out). Its activity is regulated as follows. Increased activity at pH lower than 8.0. sulfate/sulfate exchange activity is inhibited strongly by pyridoxal 5'-phosphate, bathophenanthroline and the organic mercurials mersalyl, p-chloromercuribenzoate and HgCl2. Proton conductance is activated by cardiolipin and long-chain free fatty acids and inhibited by purine nucleotides ATP and ADP. Chloride ion transporter activity is inhibited by long-chain free fatty acids. Transports inorganic anions (sulfate, sulfite, thiosulfate and phosphate) and, to a lesser extent, a variety of dicarboxylates (e.g. malonate, malate and citramalate) and, even more so, aspartate and glutamate and tricarboxylates. May catalyze the export of sulfite and thiosulfate (the hydrogen sulfide degradation products) from the mitochondria, thereby modulating the level of the hydrogen sulfide. Also can mediate a very low unidirectional transport of anions including sulfate, phosphate, (S)-malate, citrate, L-aspartate and L-glutamate. Maintains oxidative balance (through uncoupling activities) and ATP production (by modifying mitochondrial membrane potential). Is able to transport protons across lipid membranes. Also exhibits transmembrane chloride transport activity to a lesser extent. May modify mitochondrial respiratory efficiency and mitochondrial oxidant production. This is Brain mitochondrial carrier protein 1 from Homo sapiens (Human).